Here is a 516-residue protein sequence, read N- to C-terminus: D-alanine--D-alanyl carrier protein ligase (516 aa).

Residue 156 to 157 (TS) participates in ATP binding. Aspartate 203 lines the D-alanine pocket. 298 to 303 (NAYGPT) is an ATP binding site. Valine 307 is a D-alanine binding site. Residues aspartate 389, 401 to 404 (YGGR), and lysine 503 contribute to the ATP site. Lysine 503 contacts D-alanine.

This sequence belongs to the ATP-dependent AMP-binding enzyme family. DltA subfamily.

The protein resides in the cytoplasm. The catalysed reaction is holo-[D-alanyl-carrier protein] + D-alanine + ATP = D-alanyl-[D-alanyl-carrier protein] + AMP + diphosphate. The protein operates within cell wall biogenesis; lipoteichoic acid biosynthesis. Catalyzes the first step in the D-alanylation of lipoteichoic acid (LTA), the activation of D-alanine and its transfer onto the D-alanyl carrier protein (Dcp) DltC. In an ATP-dependent two-step reaction, forms a high energy D-alanyl-AMP intermediate, followed by transfer of the D-alanyl residue as a thiol ester to the phosphopantheinyl prosthetic group of the Dcp. D-alanylation of LTA plays an important role in modulating the properties of the cell wall in Gram-positive bacteria, influencing the net charge of the cell wall. The polypeptide is D-alanine--D-alanyl carrier protein ligase (Streptococcus pneumoniae (strain 70585)).